Consider the following 122-residue polypeptide: MASAPAQQPTLTVEQARVVLSEVIQAFSVPENAARMEEARESACNDMGKMLQLVLPVATQIQQEVIKAYGFNNEGEGVLKFARLVKMYETQDPEIAAMSVKLKSLLLPPLSTPPIGSGIPTS.

The protein belongs to the UPF0456 family.

The protein localises to the cytoplasm. This Danio rerio (Zebrafish) protein is Protein C10.